The chain runs to 209 residues: Scoloptoxin SSD346 (209 aa).

The signal sequence occupies residues 1–22 (NILLSSTLFVLLMFQIIGSGLG).

In terms of processing, contains 2 disulfide bonds. Expressed by the venom gland.

It is found in the secreted. In terms of biological role, may act as a voltage-gated calcium channel inhibitor. This is Scoloptoxin SSD346 from Scolopendra dehaani (Thai centipede).